The primary structure comprises 310 residues: Apolipoprotein E (310 aa).

Residues 1–18 (MKVLWAALVVTLLAGCQA) form the signal peptide. Repeat copies occupy residues 77 to 98 (VLIE…QQLG), 99 to 120 (PMAQ…ARLG), 121 to 142 (ADME…AMMG), 143 to 164 (QSTE…KRLL), 165 to 186 (RDAE…EGAE), 187 to 204 (RSVN…EQAA), 205 to 226 (TVRS…QRLR), and 227 to 248 (GRLE…EQVQ). The segment at 77 to 248 (VLIEETMKEV…RLDEVREQVQ (172 aa)) is 8 X 22 AA approximate tandem repeats. Methionine 140 is modified (methionine sulfoxide). Serine 144 is modified (phosphoserine). Residues 155–165 (HLRKLRKRLLR) are LDL and other lipoprotein receptors binding. 159 to 162 (LRKR) serves as a coordination point for heparin. A lipid-binding and lipoprotein association region spans residues 203–283 (AATVRSLVSK…SWFEPLVQDM (81 aa)). Residue 222–229 (GQRLRGRL) coordinates heparin. The tract at residues 259–310 (NQMRLQAEAFHARLKSWFEPLVQDMQQRWAELVEKVQLAVGTSPTSESSEKQ) is homooligomerization. The interval 271–283 (RLKSWFEPLVQDM) is specificity for association with VLDL.

The protein belongs to the apolipoprotein A1/A4/E family. Homotetramer. May interact with ABCA1; functionally associated with ABCA1 in the biogenesis of HDLs. May interact with APP/A4 amyloid-beta peptide; the interaction is extremely stable in vitro but its physiological significance is unclear. May interact with MAPT. May interact with MAP2. In the cerebrospinal fluid, interacts with secreted SORL1. Interacts with PMEL; this allows the loading of PMEL luminal fragment on ILVs to induce fibril nucleation. In terms of processing, APOE exists as multiple glycosylated and sialylated glycoforms within cells and in plasma. The extent of glycosylation and sialylation are tissue and context specific. Glycated in plasma VLDL. Post-translationally, phosphorylated by FAM20C in the extracellular medium.

It localises to the secreted. It is found in the extracellular space. Its subcellular location is the extracellular matrix. The protein localises to the extracellular vesicle. The protein resides in the endosome. It localises to the multivesicular body. In terms of biological role, APOE is an apolipoprotein, a protein associating with lipid particles, that mainly functions in lipoprotein-mediated lipid transport between organs via the plasma and interstitial fluids. APOE is a core component of plasma lipoproteins and is involved in their production, conversion and clearance. Apolipoproteins are amphipathic molecules that interact both with lipids of the lipoprotein particle core and the aqueous environment of the plasma. As such, APOE associates with chylomicrons, chylomicron remnants, very low density lipoproteins (VLDL) and intermediate density lipoproteins (IDL) but shows a preferential binding to high-density lipoproteins (HDL). It also binds a wide range of cellular receptors including the LDL receptor/LDLR, the LDL receptor-related proteins LRP1, LRP2 and LRP8 and the very low-density lipoprotein receptor/VLDLR that mediate the cellular uptake of the APOE-containing lipoprotein particles. Finally, APOE also has a heparin-binding activity and binds heparan-sulfate proteoglycans on the surface of cells, a property that supports the capture and the receptor-mediated uptake of APOE-containing lipoproteins by cells. A main function of APOE is to mediate lipoprotein clearance through the uptake of chylomicrons, VLDLs, and HDLs by hepatocytes. APOE is also involved in the biosynthesis by the liver of VLDLs as well as their uptake by peripheral tissues ensuring the delivery of triglycerides and energy storage in muscle, heart and adipose tissues. By participating in the lipoprotein-mediated distribution of lipids among tissues, APOE plays a critical role in plasma and tissues lipid homeostasis. APOE is also involved in two steps of reverse cholesterol transport, the HDLs-mediated transport of cholesterol from peripheral tissues to the liver, and thereby plays an important role in cholesterol homeostasis. First, it is functionally associated with ABCA1 in the biogenesis of HDLs in tissues. Second, it is enriched in circulating HDLs and mediates their uptake by hepatocytes. APOE also plays an important role in lipid transport in the central nervous system, regulating neuron survival and sprouting. The chain is Apolipoprotein E (APOE) from Tapirus indicus (Asiatic tapir).